The sequence spans 263 residues: MILDEIIKKTREDIIKRESEFSLDWLGRSLAFNSRAPRDVFSYLSATPEDPYRVIAEVKKASPSRGVIRENFDPIAIAQSYEIGGASAISILTEPHFFQGNLDYLAQIRRYVSIPLLRKDFIVTKYQILEALVHGADFILLIAAALSKAELKELLGYTRHLGMEALVEVHDKSDLVKAIYAGSDIIGINHRNLQTFEMNMNLSYELIPLIPNGKIIVAESGIYEHGQLEDLSKAGVDAFLVGESLMREDDEEAALKKLKFGSN.

It belongs to the TrpC family.

The enzyme catalyses 1-(2-carboxyphenylamino)-1-deoxy-D-ribulose 5-phosphate + H(+) = (1S,2R)-1-C-(indol-3-yl)glycerol 3-phosphate + CO2 + H2O. It participates in amino-acid biosynthesis; L-tryptophan biosynthesis; L-tryptophan from chorismate: step 4/5. This is Indole-3-glycerol phosphate synthase from Sulfurimonas denitrificans (strain ATCC 33889 / DSM 1251) (Thiomicrospira denitrificans (strain ATCC 33889 / DSM 1251)).